The following is a 153-amino-acid chain: 6,7-dimethyl-8-ribityllumazine synthase (153 aa).

5-amino-6-(D-ribitylamino)uracil is bound by residues F21, A55 to E57, and C79 to I81. (2S)-2-hydroxy-3-oxobutyl phosphate is bound at residue A84–T85. The Proton donor role is filled by H87. A 5-amino-6-(D-ribitylamino)uracil-binding site is contributed by F112. R126 provides a ligand contact to (2S)-2-hydroxy-3-oxobutyl phosphate.

This sequence belongs to the DMRL synthase family. Forms an icosahedral capsid composed of 60 subunits, arranged as a dodecamer of pentamers.

It carries out the reaction (2S)-2-hydroxy-3-oxobutyl phosphate + 5-amino-6-(D-ribitylamino)uracil = 6,7-dimethyl-8-(1-D-ribityl)lumazine + phosphate + 2 H2O + H(+). It functions in the pathway cofactor biosynthesis; riboflavin biosynthesis; riboflavin from 2-hydroxy-3-oxobutyl phosphate and 5-amino-6-(D-ribitylamino)uracil: step 1/2. In terms of biological role, catalyzes the formation of 6,7-dimethyl-8-ribityllumazine by condensation of 5-amino-6-(D-ribitylamino)uracil with 3,4-dihydroxy-2-butanone 4-phosphate. This is the penultimate step in the biosynthesis of riboflavin. This is 6,7-dimethyl-8-ribityllumazine synthase from Staphylococcus epidermidis (strain ATCC 35984 / DSM 28319 / BCRC 17069 / CCUG 31568 / BM 3577 / RP62A).